We begin with the raw amino-acid sequence, 805 residues long: RFX-like transcription factor daf-19 (805 aa).

Over residues 1-14 (MTNEEPVPSTSSVL) the composition is skewed to polar residues. The disordered stretch occupies residues 1-113 (MTNEEPVPST…TPRKKMEPED (113 aa)). The span at 19–92 (KNVKIETPSR…DSKSLSKETH (74 aa)) shows a compositional bias: basic and acidic residues. Over residues 93-104 (NTISTRSSSSGT) the composition is skewed to polar residues. The RFX-type winged-helix DNA-binding region spans 260–334 (TVNWLFENYE…YHYYGIRLKD (75 aa)).

Belongs to the RFX family. In terms of tissue distribution, ciliated sensory neurons. As to expression, expressed in the male tail HOB and RnB neurons but not in male-specific CEM head neurons or other ciliated neurons.

The protein resides in the nucleus. Probable transcription factor. May regulate some genes of ciliated sensory neurons. May activate the expression of the shared components of sensory cilia, but not the cell-type-specific expression. Together with transcription factor atf-7, involved in regulation of the serotonergic response of ADF neurons to pathogenic food. Functionally, involved in male mating behavior; may play a role in functional specialization of PKD ciliated sensory neurons. This is RFX-like transcription factor daf-19 from Caenorhabditis elegans.